The chain runs to 85 residues: Large ribosomal subunit protein bL27 (85 aa).

The interval 1 to 21 (MAHKKAGGSTRNGRDSNAQRL) is disordered. The segment covering 9-19 (STRNGRDSNAQ) has biased composition (polar residues).

The protein belongs to the bacterial ribosomal protein bL27 family.

The sequence is that of Large ribosomal subunit protein bL27 from Pectobacterium atrosepticum (strain SCRI 1043 / ATCC BAA-672) (Erwinia carotovora subsp. atroseptica).